The following is an 85-amino-acid chain: U4-theraphotoxin-Hhn1w (85 aa).

A signal peptide spans 1–22 (MKVTLIAILTCAAVLALHTTAA). The propeptide occupies 23–48 (EELEAESQLMEVGMPDTELAAVDEER). Cystine bridges form between Cys52/Cys66, Cys56/Cys77, and Cys71/Cys82.

The protein belongs to the neurotoxin 12 (Hwtx-2) family. 02 (Hwtx-2) subfamily. As to expression, expressed by the venom gland.

The protein resides in the secreted. Its function is as follows. Postsynaptic neurotoxin. The chain is U4-theraphotoxin-Hhn1w from Cyriopagopus hainanus (Chinese bird spider).